The primary structure comprises 296 residues: Ribosomal RNA small subunit methyltransferase H (296 aa).

S-adenosyl-L-methionine contacts are provided by residues 38 to 40 (GVH), Glu57, Phe80, Asp103, and His110.

It belongs to the methyltransferase superfamily. RsmH family.

It localises to the cytoplasm. It carries out the reaction cytidine(1402) in 16S rRNA + S-adenosyl-L-methionine = N(4)-methylcytidine(1402) in 16S rRNA + S-adenosyl-L-homocysteine + H(+). Its function is as follows. Specifically methylates the N4 position of cytidine in position 1402 (C1402) of 16S rRNA. In Borreliella burgdorferi (strain ATCC 35210 / DSM 4680 / CIP 102532 / B31) (Borrelia burgdorferi), this protein is Ribosomal RNA small subunit methyltransferase H.